Reading from the N-terminus, the 223-residue chain is Ras-related protein Rab-37 (223 aa).

Residues 1-23 (MTGTPGAVATRDGEAPERSPPCS) are disordered. An N-acetylthreonine modification is found at Thr2. The GTP site is built by Thr38, Gly39, Val40, Gly41, Lys42, Thr43, Cys44, and Thr62. Thr43 is a binding site for Mg(2+). Short sequence motifs (switch) lie at residues 52–67 (GAFLSGTFIATVGIDF) and 85–102 (DTAGQERFRSVTHAYYRD). Thr62 and Asp85 together coordinate Mg(2+). Positions 88, 143, 144, 146, 147, 173, 174, and 175 each coordinate GTP. 2 S-geranylgeranyl cysteine lipidation sites follow: Cys219 and Cys220. Position 220 is a cysteine methyl ester (Cys220). Positions 221 to 223 (SFM) are cleaved as a propeptide — removed in mature form.

The protein belongs to the small GTPase superfamily. Rab family. Interacts with RIMS1. Interacts (in GDP-bound form) with RPGR, RPGR functions as guanine exchange factor (GEF). It depends on Mg(2+) as a cofactor.

It is found in the cytoplasmic vesicle. The protein resides in the cell projection. The protein localises to the cilium. The enzyme catalyses GTP + H2O = GDP + phosphate + H(+). Regulated by guanine nucleotide exchange factors (GEFs) including RPGR which promote the exchange of bound GDP for free GTP. Regulated by GTPase activating proteins (GAPs) which increase the GTP hydrolysis activity. Inhibited by GDP dissociation inhibitors (GDIs). In terms of biological role, the small GTPases Rab are key regulators of intracellular membrane trafficking, from the formation of transport vesicles to their fusion with membranes. Rabs cycle between an inactive GDP-bound form and an active GTP-bound form that is able to recruit to membranes different sets of downstream effectors directly responsible for vesicle formation, movement, tethering and fusion. Acts as an organizer for autophagosome biogenesis in a GTP-dependent manner. Involved in retinal homeostasis by autophagy regulation. This is Ras-related protein Rab-37 from Homo sapiens (Human).